The chain runs to 971 residues: DNA-directed RNA polymerase subunit Rpo1N (971 aa).

At M1 the chain carries Blocked amino end (Met). The Zn(2+) site is built by C62, C65, C72, H75, C102, C105, C149, and C152. The disordered stretch occupies residues 185 to 204 (SMQPDEDEDDAGVSPQELAE). Residues D527, D529, and D531 each contribute to the Mg(2+) site. The interval 951–971 (VEEPPTNLSEHGAAWEVESDD) is disordered.

Belongs to the RNA polymerase beta' chain family. In terms of assembly, part of the RNA polymerase complex. Mg(2+) serves as cofactor. Requires Zn(2+) as cofactor. Post-translationally, the N-terminus is blocked.

It is found in the cytoplasm. It carries out the reaction RNA(n) + a ribonucleoside 5'-triphosphate = RNA(n+1) + diphosphate. Functionally, DNA-dependent RNA polymerase (RNAP) catalyzes the transcription of DNA into RNA using the four ribonucleoside triphosphates as substrates. Forms the clamp head domain. The polypeptide is DNA-directed RNA polymerase subunit Rpo1N (Halobacterium salinarum (strain ATCC 29341 / DSM 671 / R1)).